The chain runs to 104 residues: uncharacterized protein (104 aa).

The N-terminal stretch at 1–23 is a signal peptide; it reads MDIHDYVELIALAFWVISVVSVG.

This is an uncharacterized protein from Lactobacillus helveticus (Lactobacillus suntoryeus).